The chain runs to 439 residues: N5-carboxyaminoimidazole ribonucleotide synthase (439 aa).

Residues lysine 113, lysine 160, 197-200 (EERV), glutamate 205, and 283-284 (NE) contribute to the ATP site. One can recognise an ATP-grasp domain in the interval 117-313 (RRRLAALGAA…QFEQHLRAVL (197 aa)).

This sequence belongs to the PurK/PurT family. Homodimer.

It carries out the reaction 5-amino-1-(5-phospho-beta-D-ribosyl)imidazole + hydrogencarbonate + ATP = 5-carboxyamino-1-(5-phospho-D-ribosyl)imidazole + ADP + phosphate + 2 H(+). It functions in the pathway purine metabolism; IMP biosynthesis via de novo pathway; 5-amino-1-(5-phospho-D-ribosyl)imidazole-4-carboxylate from 5-amino-1-(5-phospho-D-ribosyl)imidazole (N5-CAIR route): step 1/2. Catalyzes the ATP-dependent conversion of 5-aminoimidazole ribonucleotide (AIR) and HCO(3)(-) to N5-carboxyaminoimidazole ribonucleotide (N5-CAIR). The polypeptide is N5-carboxyaminoimidazole ribonucleotide synthase (Mycobacterium leprae (strain TN)).